The chain runs to 115 residues: ATP synthase subunits region ORF 7 (115 aa).

The chain is ATP synthase subunits region ORF 7 from Fuscovulum blasticum (Rhodobacter blasticus).